A 484-amino-acid chain; its full sequence is PTS system MurNAc-GlcNAc-specific EIIBC component (484 aa).

A PTS EIIB type-1 domain is found at 5-87; it reads QQLAERIIAA…AELSGVKLGD (83 aa). Residue cysteine 27 is the Phosphocysteine intermediate; for EIIB activity of the active site. The PTS EIIC type-1 domain maps to 130 to 484; it reads KSIANIFIPL…AMRQTDLLGD (355 aa). 10 helical membrane-spanning segments follow: residues 135 to 155, 160 to 180, 200 to 220, 234 to 254, 274 to 294, 305 to 325, 349 to 369, 384 to 404, 408 to 428, and 450 to 470; these read IFIPLIPAFIGAGLIGGIAAV, MVAGYISGAWITQLITVFNVI, FGATPGLGGVIGGTTLLTGIA, LQPGQGGIIGVIFAVWILSIV, IALLIVGLLTIFIFMPLAGFV, IISIGGVFSGFIIGASFLPLV, LLPIAAMAGAGQVGAALALWV, ALPVGFLGIGEPLIYGVTLPL, FLTACIGGGIGGAVIGGIGHI, and LGYIAGLLTAYAGGFVCTYLF.

Its subcellular location is the cell membrane. It carries out the reaction N-acetyl-beta-D-muramate-(1-&gt;4)-N-acetyl-D-glucosamine(out) + N(pros)-phospho-L-histidyl-[protein] = 6-phospho-N-acetyl-beta-D-muramate-(1-&gt;4)-N-acetyl-D-glucosamine(in) + L-histidyl-[protein]. Its pathway is cell wall biogenesis; peptidoglycan recycling. Its function is as follows. The phosphoenolpyruvate-dependent sugar phosphotransferase system (sugar PTS), a major carbohydrate active transport system, catalyzes the phosphorylation of incoming sugar substrates concomitantly with their translocation across the cell membrane. This system is involved in the uptake and phosphorylation of MurNAc-GlcNAc, the principle peptidoglycan turnover product of S.aureus, yielding cytoplasmic MurNAc 6P-GlcNAc. This Staphylococcus aureus (strain bovine RF122 / ET3-1) protein is PTS system MurNAc-GlcNAc-specific EIIBC component.